Consider the following 599-residue polypeptide: Sulfite reductase [NADPH] flavoprotein alpha-component (599 aa).

The Flavodoxin-like domain occupies 64–202 (ITIISASQTG…AASEWRARVV (139 aa)). FMN-binding positions include 70–75 (SQTGNA), 117–120 (STQG), and 153–162 (LGDSSYEFFC). One can recognise an FAD-binding FR-type domain in the interval 234-448 (DAPLVASLSV…IEHNDNFRLP (215 aa)). FAD-binding positions include T322, A356, 386–389 (RLYS), 404–406 (TVG), Y410, and 419–422 (GGAS). Residues 519-520 (SR), 525-529 (KVYVQ), and D561 contribute to the NADP(+) site. Y599 provides a ligand contact to FAD.

Belongs to the NADPH-dependent sulphite reductase flavoprotein subunit CysJ family. This sequence in the N-terminal section; belongs to the flavodoxin family. It in the C-terminal section; belongs to the flavoprotein pyridine nucleotide cytochrome reductase family. Alpha(8)-beta(8). The alpha component is a flavoprotein, the beta component is a hemoprotein. The cofactor is FAD. FMN is required as a cofactor.

It catalyses the reaction hydrogen sulfide + 3 NADP(+) + 3 H2O = sulfite + 3 NADPH + 4 H(+). The protein operates within sulfur metabolism; hydrogen sulfide biosynthesis; hydrogen sulfide from sulfite (NADPH route): step 1/1. Functionally, component of the sulfite reductase complex that catalyzes the 6-electron reduction of sulfite to sulfide. This is one of several activities required for the biosynthesis of L-cysteine from sulfate. The flavoprotein component catalyzes the electron flow from NADPH -&gt; FAD -&gt; FMN to the hemoprotein component. This Escherichia coli O157:H7 protein is Sulfite reductase [NADPH] flavoprotein alpha-component.